A 476-amino-acid polypeptide reads, in one-letter code: Doublesex and mab-3 related transcription factor 3 (476 aa).

Positions 29 to 76 (CARCRNHGVLSWLKGHKRYCRFKDCTCEKCILIIERQRVMAAQVALRR) form a DNA-binding region, DM. Disordered regions lie at residues 89–130 (DSLR…RPAT) and 147–195 (GTLP…SKNC). Over residues 102–121 (DAAATAATASQSSPASQASQ) the composition is skewed to low complexity. Residues 176-185 (FSDKDTDQRS) are compositionally biased toward basic and acidic residues. One can recognise a DMA domain in the interval 255–290 (RPPLEVLKKIFPNQKPTVLELILKGCGGDLVSAVEV). Residues 418–432 (NSTSVFRSSPVLSSR) show a composition bias toward polar residues. The interval 418 to 476 (NSTSVFRSSPVLSSRTTEDPRISIPDDGCPIVAKQSIYTEDDYDERSDSSDSRILNTSS) is disordered.

Belongs to the DMRT family.

It localises to the nucleus. In terms of biological role, probable transcription factor that plays a role in configuring the spinal circuits controlling stride in vertebrates. Involved in neuronal specification within a specific subdivision of spinal cord neurons and in the development of a coordinated locomotor network controlling limb movements. May regulate transcription during sexual development. In Rattus norvegicus (Rat), this protein is Doublesex and mab-3 related transcription factor 3 (Dmrt3).